Here is a 599-residue protein sequence, read N- to C-terminus: Putative sensor histidine kinase NtrY-like (599 aa).

Helical transmembrane passes span 17–37 (VLIF…FYVI), 44–64 (FSTI…LGVV), 85–105 (IVIA…VFSV), and 285–305 (IMFI…GVIF). The HAMP domain maps to 307–361 (AKIVKPIKKLVTATDNVKDGDLTVQVPENEVDKDEIGTLYVAFNRMIKQLSRQQR). The Histidine kinase domain maps to 378–589 (KVAHEIKNPL…IIDIKFDLKE (212 aa)). His381 carries the post-translational modification Phosphohistidine; by autocatalysis.

Its subcellular location is the cell membrane. It catalyses the reaction ATP + protein L-histidine = ADP + protein N-phospho-L-histidine.. Functionally, member of the two-component regulatory system RC0948/RC0849. This chain is Putative sensor histidine kinase NtrY-like, found in Rickettsia conorii (strain ATCC VR-613 / Malish 7).